Here is a 626-residue protein sequence, read N- to C-terminus: Serine/threonine-protein kinase ATG1a (626 aa).

In terms of domain architecture, Protein kinase spans Tyr-10–Leu-268. ATP contacts are provided by residues Ile-16–Val-24 and Lys-39. Residue Asp-132 is the Proton acceptor of the active site. Positions Lys-288–Glu-308 are enriched in polar residues. The segment at Lys-288–Ser-347 is disordered. Positions Ser-315 to Ser-325 are enriched in low complexity. A compositionally biased stretch (basic and acidic residues) spans Ser-330 to Glu-339. Residues Tyr-360–Val-363 carry the AIM (Atg8-family-interacting motif) motif.

This sequence belongs to the protein kinase superfamily. Ser/Thr protein kinase family. Interacts with ATG13A. Interacts with ATG8E. Binds to ATG8E on autophagic vesicles. In terms of processing, phosphorylated during nutrient starvation. Dephosphorylated in nutrient-rich conditions.

The protein resides in the cytoplasmic vesicle. It is found in the autophagosome. In terms of biological role, serine/threonine protein kinase involved in autophagy in a nutritional condition-dependent manner. The ATG1-ATG13 protein kinase complex regulates downstream events required for autophagosome enclosure and/or vacuolar delivery. Becomes a target of autophagy under nutrient starvation. Connects autophagy to plant nutritional status. The protein is Serine/threonine-protein kinase ATG1a of Arabidopsis thaliana (Mouse-ear cress).